Here is a 413-residue protein sequence, read N- to C-terminus: CinA-like protein (413 aa).

The protein belongs to the CinA family.

The protein is CinA-like protein of Desulfosudis oleivorans (strain DSM 6200 / JCM 39069 / Hxd3) (Desulfococcus oleovorans).